The chain runs to 379 residues: Probable pectin lyase B (379 aa).

An N-terminal signal peptide occupies residues methionine 1–alanine 20. Cystine bridges form between cysteine 83/cysteine 102 and cysteine 92/cysteine 226. Residues asparagine 129 and asparagine 252 are each glycosylated (N-linked (GlcNAc...) asparagine). Residue arginine 256 is part of the active site. A disulfide bond links cysteine 323 and cysteine 331.

This sequence belongs to the polysaccharide lyase 1 family.

The protein localises to the secreted. It carries out the reaction Eliminative cleavage of (1-&gt;4)-alpha-D-galacturonan methyl ester to give oligosaccharides with 4-deoxy-6-O-methyl-alpha-D-galact-4-enuronosyl groups at their non-reducing ends.. Functionally, pectinolytic enzymes consist of four classes of enzymes: pectin lyase, polygalacturonase, pectin methylesterase and rhamnogalacturonase. Among pectinolytic enzymes, pectin lyase is the most important in depolymerization of pectin, since it cleaves internal glycosidic bonds of highly methylated pectins. This chain is Probable pectin lyase B (pelB), found in Aspergillus niger (strain ATCC MYA-4892 / CBS 513.88 / FGSC A1513).